A 366-amino-acid polypeptide reads, in one-letter code: UDP-N-acetylglucosamine--N-acetylmuramyl-(pentapeptide) pyrophosphoryl-undecaprenol N-acetylglucosamine transferase (366 aa).

UDP-N-acetyl-alpha-D-glucosamine is bound by residues 10–12 (TGG), Asn124, Arg166, Ser196, and Gln296.

It belongs to the glycosyltransferase 28 family. MurG subfamily.

It localises to the cell membrane. It carries out the reaction di-trans,octa-cis-undecaprenyl diphospho-N-acetyl-alpha-D-muramoyl-L-alanyl-D-glutamyl-meso-2,6-diaminopimeloyl-D-alanyl-D-alanine + UDP-N-acetyl-alpha-D-glucosamine = di-trans,octa-cis-undecaprenyl diphospho-[N-acetyl-alpha-D-glucosaminyl-(1-&gt;4)]-N-acetyl-alpha-D-muramoyl-L-alanyl-D-glutamyl-meso-2,6-diaminopimeloyl-D-alanyl-D-alanine + UDP + H(+). The protein operates within cell wall biogenesis; peptidoglycan biosynthesis. Its function is as follows. Cell wall formation. Catalyzes the transfer of a GlcNAc subunit on undecaprenyl-pyrophosphoryl-MurNAc-pentapeptide (lipid intermediate I) to form undecaprenyl-pyrophosphoryl-MurNAc-(pentapeptide)GlcNAc (lipid intermediate II). In Alkaliphilus oremlandii (strain OhILAs) (Clostridium oremlandii (strain OhILAs)), this protein is UDP-N-acetylglucosamine--N-acetylmuramyl-(pentapeptide) pyrophosphoryl-undecaprenol N-acetylglucosamine transferase.